The primary structure comprises 2256 residues: GON-4-like protein (2256 aa).

3 disordered regions span residues 1 to 56 (MLPC…DSAG), 105 to 213 (PSLE…SLGP), and 227 to 266 (LFIPTEEQDGEESDKRKKTKKGTKRKRDGRGQEQGTMTYD). Basic and acidic residues predominate over residues 23–35 (EDLHLEAAVKPDT). Positions 40 to 53 (DCTSESLSWGQSHD) are enriched in polar residues. The segment covering 141–176 (TREDGGDHTVPEEPPSGEHAEEVKAEGGELEMHSEG) has biased composition (basic and acidic residues). Basic residues predominate over residues 242–254 (RKKTKKGTKRKRD). Ser346 is modified (phosphoserine). The span at 366-395 (EDDDSSDEEYQPDEEEEDETAEESLLESDV) shows a compositional bias: acidic residues. Disordered stretches follow at residues 366-428 (EDDD…VLSE), 441-460 (SAEVVPMGPPPPPKPKQTRD), and 545-573 (DVENEDEADDDDDPEYNFLEDLDEPDTED). Positions 545-571 (DVENEDEADDDDDPEYNFLEDLDEPDT) are enriched in acidic residues. A required for interaction with YY1, SIN3A and HDAC1, and transcriptional repression activity region spans residues 609–1363 (EMGFSNMEDD…DCMEEISSDF (755 aa)). Ser783 is subject to Phosphoserine. Low complexity-rich tracts occupy residues 947–959 (TAGGSVTAATETS) and 1094–1115 (PWSESQSAPPSSSAPKLMLPSL). Disordered stretches follow at residues 947–969 (TAGGSVTAATETSTDQHLQKTSP), 1078–1141 (AALP…SPCV), 1241–1288 (AEGK…EAVS), and 1360–1620 (SSDF…SRAR). Residues 1119–1135 (KFRKPYVRRKPTRRKGA) show a composition bias toward basic residues. Residues 1364 to 1386 (PKQDIGEEVKEECCMELDRDSPQ) show a composition bias toward basic and acidic residues. 2 stretches are compositionally biased toward polar residues: residues 1387-1401 (EKASSVSEMSKQTAT) and 1429-1444 (LPQSTLSSMDQGTVLN). Ser1445 is subject to Phosphoserine. Positions 1475–1495 (GAEEEEEEDFDDLTQDEEDEL) are enriched in acidic residues. The span at 1496-1510 (SSASEESVLSVPELQ) shows a compositional bias: low complexity. Positions 1529-1553 (GESEEENSQEENSEPEEEEEEEAEG) are enriched in acidic residues. The span at 1606–1620 (RSSHRARSRRGSRAR) shows a compositional bias: basic residues. PAH domains are found at residues 1644–1716 (EQKD…LLPE) and 1726–1797 (EQQA…FDHL). Disordered stretches follow at residues 1831-1886 (VEEE…LKKS) and 1909-1966 (LELV…APIP). Positions 1851–1868 (EIGVQHQDKESEWPEAAK) are enriched in basic and acidic residues. Phosphoserine occurs at positions 1921 and 1994. Disordered regions lie at residues 2050 to 2078 (PETSETERLPGTVELPAPLPSPVSLSTRD) and 2110 to 2148 (IRGTSSGASASEAAPTASREGLAEDSETQGKGPEAVLPK). The segment covering 2111 to 2129 (RGTSSGASASEAAPTASRE) has biased composition (low complexity). A Myb-like domain is found at 2163–2216 (STGEKVVLWTREADRVILTMCQEQGAQPHTFSVISQQLGNKTPVEVSHRFRELM). A disordered region spans residues 2223 to 2256 (CEASSEDEDDATSTSNADQLSDHGDLLSEEELDE).

As to quaternary structure, found in a complex with YY1, SIN3A and HDAC1.

It localises to the nucleus. In terms of biological role, has transcriptional repressor activity, probably as part of a complex with YY1, SIN3A and HDAC1. Required for B cell lymphopoiesis. This Rattus norvegicus (Rat) protein is GON-4-like protein (Gon4l).